Here is a 586-residue protein sequence, read N- to C-terminus: Dual specificity tyrosine-phosphorylation-regulated kinase 3 (586 aa).

Residues 1-13 (MGGAARERGRKDA) show a composition bias toward basic and acidic residues. Positions 1–187 (MGGAARERGR…QGVIGGPNNG (187 aa)) are disordered. The region spanning 208–521 (YEVLKIIGKG…PAQALRHPWI (314 aa)) is the Protein kinase domain. ATP-binding positions include 214–222 (IGKGSFGQV), K237, and 287–290 (FELL). Catalysis depends on D334, which acts as the Proton acceptor. A Phosphotyrosine modification is found at Y368. Positions 467–480 (RSRRGKKRGPPGSK) match the Nuclear localization signal motif.

The protein belongs to the protein kinase superfamily. CMGC Ser/Thr protein kinase family. MNB/DYRK subfamily. As to quaternary structure, interacts with SIRT1. Mg(2+) serves as cofactor. In terms of processing, protein kinase activity is activated following autophosphorylation at Tyr-368. Ubiquitinated at anaphase by the anaphase-promoting complex (APC/C), leading to its degradation by the proteasome. As to expression, expressed predominantly in testis. Expressed in late pachytene spermatocytes.

It is found in the nucleus. Its subcellular location is the cytoplasm. The protein localises to the nucleus speckle. It localises to the cytoplasmic granule. The protein resides in the cytoskeleton. It is found in the microtubule organizing center. Its subcellular location is the centrosome. It carries out the reaction L-seryl-[protein] + ATP = O-phospho-L-seryl-[protein] + ADP + H(+). The catalysed reaction is L-threonyl-[protein] + ATP = O-phospho-L-threonyl-[protein] + ADP + H(+). It catalyses the reaction L-tyrosyl-[protein] + ATP = O-phospho-L-tyrosyl-[protein] + ADP + H(+). Its activity is regulated as follows. Protein kinase activity is activated following autophosphorylation at Tyr-368. In terms of biological role, dual-specificity protein kinase that promotes disassembly of several types of membraneless organelles during mitosis, such as stress granules, nuclear speckles and pericentriolar material. Dual-specificity tyrosine-regulated kinases (DYRKs) autophosphorylate a critical tyrosine residue in their activation loop and phosphorylate their substrate on serine and threonine residues. Acts as a central dissolvase of membraneless organelles during the G2-to-M transition, after the nuclear-envelope breakdown: acts by mediating phosphorylation of multiple serine and threonine residues in unstructured domains of proteins, such as SRRM1 and PCM1. Does not mediate disassembly of all membraneless organelles: disassembly of P-body and nucleolus is not regulated by DYRK3. Dissolution of membraneless organelles at the onset of mitosis is also required to release mitotic regulators, such as ZNF207, from liquid-unmixed organelles where they are sequestered and keep them dissolved during mitosis. Regulates mTORC1 by mediating the dissolution of stress granules: during stressful conditions, DYRK3 partitions from the cytosol to the stress granule, together with mTORC1 components, which prevents mTORC1 signaling. When stress signals are gone, the kinase activity of DYRK3 is required for the dissolution of stress granule and mTORC1 relocation to the cytosol: acts by mediating the phosphorylation of the mTORC1 inhibitor AKT1S1, allowing full reactivation of mTORC1 signaling. Also acts as a negative regulator of EPO-dependent erythropoiesis: may place an upper limit on red cell production during stress erythropoiesis. Inhibits cell death due to cytokine withdrawal in hematopoietic progenitor cells. Promotes cell survival upon genotoxic stress through phosphorylation of SIRT1: this in turn inhibits p53/TP53 activity and apoptosis. The polypeptide is Dual specificity tyrosine-phosphorylation-regulated kinase 3 (Rattus norvegicus (Rat)).